Reading from the N-terminus, the 363-residue chain is MLETKINLGKVTYPLYMGRNLLDNLDVLIEDHIEGKTVFLLTEDNVFKYYGNPLLEKLKSSRFKYHIIESGETSKSIDTYGEIIHELTENKQDRDTIILALGGGVIGDLGGFVASTYMRGVDLIHIPTTLLAQIDSSIGGKTGINFGAIKNLLGTFYHPRAVYMDLSTLDTLPKREYIAAFGEIIKYGLIGDYDLLLDLDQHHRAYLDRTRSVDDLILKCIRMKENIVLKDERDSGMRQVLNLGHTFAHGLESSTNFQKFLHGEAVALGLIFASNLSLKLKFIAEEYHQFVNQLIYKYFSDRYILQLDTEGIVEAMTMDKKNKEHRITFILPVDKEKVEIFKNIPIEIVEESLEEIKYGFRCK.

Residues 70-75 (SGETSK), 104-108 (GVIGD), 128-129 (TT), Lys141, Lys150, and 168-171 (TLDT) each bind NAD(+). The Zn(2+) site is built by Glu183, His245, and His262.

This sequence belongs to the sugar phosphate cyclases superfamily. Dehydroquinate synthase family. Co(2+) serves as cofactor. The cofactor is Zn(2+). Requires NAD(+) as cofactor.

Its subcellular location is the cytoplasm. It catalyses the reaction 7-phospho-2-dehydro-3-deoxy-D-arabino-heptonate = 3-dehydroquinate + phosphate. It participates in metabolic intermediate biosynthesis; chorismate biosynthesis; chorismate from D-erythrose 4-phosphate and phosphoenolpyruvate: step 2/7. Its function is as follows. Catalyzes the conversion of 3-deoxy-D-arabino-heptulosonate 7-phosphate (DAHP) to dehydroquinate (DHQ). The sequence is that of 3-dehydroquinate synthase from Alkaliphilus oremlandii (strain OhILAs) (Clostridium oremlandii (strain OhILAs)).